The chain runs to 215 residues: N-(5'-phosphoribosyl)anthranilate isomerase (215 aa).

Belongs to the TrpF family.

The enzyme catalyses N-(5-phospho-beta-D-ribosyl)anthranilate = 1-(2-carboxyphenylamino)-1-deoxy-D-ribulose 5-phosphate. Its pathway is amino-acid biosynthesis; L-tryptophan biosynthesis; L-tryptophan from chorismate: step 3/5. The chain is N-(5'-phosphoribosyl)anthranilate isomerase from Chlorobium phaeobacteroides (strain DSM 266 / SMG 266 / 2430).